The sequence spans 428 residues: Adenylosuccinate synthetase (428 aa).

GTP-binding positions include G12–K18 and G40–S42. The Proton acceptor role is filled by D13. Residues D13 and G40 each coordinate Mg(2+). Residues D13–K16, N38–H41, T128, R142, Q223, T238, and R302 each bind IMP. H41 serves as the catalytic Proton donor. Residue V298 to R304 coordinates substrate. GTP-binding positions include R304, K330–D332, and G412–G414.

The protein belongs to the adenylosuccinate synthetase family. In terms of assembly, homodimer. The cofactor is Mg(2+).

The protein localises to the cytoplasm. The enzyme catalyses IMP + L-aspartate + GTP = N(6)-(1,2-dicarboxyethyl)-AMP + GDP + phosphate + 2 H(+). The protein operates within purine metabolism; AMP biosynthesis via de novo pathway; AMP from IMP: step 1/2. Its function is as follows. Plays an important role in the de novo pathway of purine nucleotide biosynthesis. Catalyzes the first committed step in the biosynthesis of AMP from IMP. The chain is Adenylosuccinate synthetase from Bifidobacterium longum subsp. infantis (strain ATCC 15697 / DSM 20088 / JCM 1222 / NCTC 11817 / S12).